A 339-amino-acid chain; its full sequence is Phosphate acyltransferase (339 aa).

This sequence belongs to the PlsX family. As to quaternary structure, homodimer. Probably interacts with PlsY.

It localises to the cytoplasm. The catalysed reaction is a fatty acyl-[ACP] + phosphate = an acyl phosphate + holo-[ACP]. It functions in the pathway lipid metabolism; phospholipid metabolism. Its function is as follows. Catalyzes the reversible formation of acyl-phosphate (acyl-PO(4)) from acyl-[acyl-carrier-protein] (acyl-ACP). This enzyme utilizes acyl-ACP as fatty acyl donor, but not acyl-CoA. In Dechloromonas aromatica (strain RCB), this protein is Phosphate acyltransferase.